A 173-amino-acid chain; its full sequence is Crossover junction endodeoxyribonuclease RuvC (173 aa).

Residues aspartate 8, glutamate 67, and aspartate 139 contribute to the active site. Residues aspartate 8, glutamate 67, and aspartate 139 each coordinate Mg(2+).

The protein belongs to the RuvC family. Homodimer which binds Holliday junction (HJ) DNA. The HJ becomes 2-fold symmetrical on binding to RuvC with unstacked arms; it has a different conformation from HJ DNA in complex with RuvA. In the full resolvosome a probable DNA-RuvA(4)-RuvB(12)-RuvC(2) complex forms which resolves the HJ. Requires Mg(2+) as cofactor.

Its subcellular location is the cytoplasm. The enzyme catalyses Endonucleolytic cleavage at a junction such as a reciprocal single-stranded crossover between two homologous DNA duplexes (Holliday junction).. Its function is as follows. The RuvA-RuvB-RuvC complex processes Holliday junction (HJ) DNA during genetic recombination and DNA repair. Endonuclease that resolves HJ intermediates. Cleaves cruciform DNA by making single-stranded nicks across the HJ at symmetrical positions within the homologous arms, yielding a 5'-phosphate and a 3'-hydroxyl group; requires a central core of homology in the junction. The consensus cleavage sequence is 5'-(A/T)TT(C/G)-3'. Cleavage occurs on the 3'-side of the TT dinucleotide at the point of strand exchange. HJ branch migration catalyzed by RuvA-RuvB allows RuvC to scan DNA until it finds its consensus sequence, where it cleaves and resolves the cruciform DNA. This chain is Crossover junction endodeoxyribonuclease RuvC, found in Shewanella loihica (strain ATCC BAA-1088 / PV-4).